We begin with the raw amino-acid sequence, 87 residues long: MVEVQKEQVYVIPLRDVKRVPCYKRANAAIKDIRGYLEHHMKSDDVKLDKSINELVWARGSQKPPRRIRVRAMKFEDGQVQAELAEE.

The protein belongs to the eukaryotic ribosomal protein eL31 family.

The chain is Large ribosomal subunit protein eL31 from Methanocorpusculum labreanum (strain ATCC 43576 / DSM 4855 / Z).